A 521-amino-acid chain; its full sequence is Maturase K (521 aa).

It belongs to the intron maturase 2 family. MatK subfamily.

The protein resides in the plastid. In terms of biological role, usually encoded in the trnK tRNA gene intron. Probably assists in splicing its own and other chloroplast group II introns. This Cuscuta exaltata (Tall dodder) protein is Maturase K.